We begin with the raw amino-acid sequence, 74 residues long: Putative defensin-like protein 36 (74 aa).

Positions methionine 1 to cysteine 22 are cleaved as a signal peptide. 3 disulfide bridges follow: cysteine 33–cysteine 59, cysteine 45–cysteine 69, and cysteine 49–cysteine 71.

It belongs to the DEFL family.

The protein localises to the secreted. The polypeptide is Putative defensin-like protein 36 (Arabidopsis thaliana (Mouse-ear cress)).